Reading from the N-terminus, the 326-residue chain is Glycolipid sulfotransferase MRA_1383 (326 aa).

40-45 contacts 3'-phosphoadenylyl sulfate; the sequence is KSGLTW. The active-site Proton acceptor is His-97. 116-124 lines the 3'-phosphoadenylyl sulfate pocket; it reads RDPRDAAVS.

Belongs to the sulfotransferase 1 family.

Its function is as follows. Involved in the synthesis of cell wall sulfolipids. The polypeptide is Glycolipid sulfotransferase MRA_1383 (Mycobacterium tuberculosis (strain ATCC 25177 / H37Ra)).